Reading from the N-terminus, the 163-residue chain is Cyclic pyranopterin monophosphate synthase (163 aa).

Residues 75 to 77 (MCH) and 115 to 116 (ME) each bind substrate. Aspartate 130 is an active-site residue.

It belongs to the MoaC family. Homohexamer; trimer of dimers.

It carries out the reaction (8S)-3',8-cyclo-7,8-dihydroguanosine 5'-triphosphate = cyclic pyranopterin phosphate + diphosphate. The protein operates within cofactor biosynthesis; molybdopterin biosynthesis. Its function is as follows. Catalyzes the conversion of (8S)-3',8-cyclo-7,8-dihydroguanosine 5'-triphosphate to cyclic pyranopterin monophosphate (cPMP). This is Cyclic pyranopterin monophosphate synthase from Bacillus pumilus (strain SAFR-032).